A 513-amino-acid chain; its full sequence is Cyclin-dependent kinase C-2 (513 aa).

One can recognise a Protein kinase domain in the interval Phe25 to Phe325. ATP contacts are provided by residues Ile31–Val39 and Lys54. Thr35 bears the Phosphothreonine mark. Tyr36 is subject to Phosphotyrosine. Asp164 serves as the catalytic Proton acceptor. At Ser191 the chain carries Phosphoserine. A Phosphothreonine modification is found at Thr198. Positions Ser336–Thr348 are enriched in basic and acidic residues. A disordered region spans residues Ser336–Gln513. A compositionally biased stretch (low complexity) spans Pro417–Arg433. Composition is skewed to gly residues over residues Gly457–Gly478 and Gly485–Arg494. Polar residues predominate over residues Asn497–Gln513.

Belongs to the protein kinase superfamily. CMGC Ser/Thr protein kinase family. CDC2/CDKX subfamily.

It carries out the reaction L-seryl-[protein] + ATP = O-phospho-L-seryl-[protein] + ADP + H(+). The enzyme catalyses L-threonyl-[protein] + ATP = O-phospho-L-threonyl-[protein] + ADP + H(+). It catalyses the reaction [DNA-directed RNA polymerase] + ATP = phospho-[DNA-directed RNA polymerase] + ADP + H(+). The protein is Cyclin-dependent kinase C-2 (CDKC-2) of Oryza sativa subsp. japonica (Rice).